The chain runs to 73 residues: Conotoxin Bt11.1 (73 aa).

Residues 1–20 form the signal peptide; that stretch reads MKLCVAFLLVLVILPSVIGG. Positions 21 to 35 are excised as a propeptide; that stretch reads KPSERTLSGATRRGD. 4 cysteine pairs are disulfide-bonded: C39-C53, C46-C58, C52-C63, and C57-C70.

This sequence belongs to the conotoxin I1 superfamily. Expressed by the venom duct.

It is found in the secreted. The polypeptide is Conotoxin Bt11.1 (Conus betulinus (Beech cone)).